A 161-amino-acid chain; its full sequence is Protein-export protein SecB (161 aa).

The protein belongs to the SecB family. Homotetramer, a dimer of dimers. One homotetramer interacts with 1 SecA dimer.

It localises to the cytoplasm. In terms of biological role, one of the proteins required for the normal export of preproteins out of the cell cytoplasm. It is a molecular chaperone that binds to a subset of precursor proteins, maintaining them in a translocation-competent state. It also specifically binds to its receptor SecA. The protein is Protein-export protein SecB of Pseudomonas putida (strain ATCC 700007 / DSM 6899 / JCM 31910 / BCRC 17059 / LMG 24140 / F1).